The primary structure comprises 71 residues: Cell division protein ZapB (71 aa).

A coiled-coil region spans residues 5 to 67 (LEVLEQLESK…RALLGKMEQM (63 aa)).

It belongs to the ZapB family. As to quaternary structure, homodimer. The ends of the coiled-coil dimer bind to each other, forming polymers. Interacts with FtsZ.

The protein resides in the cytoplasm. Functionally, non-essential, abundant cell division factor that is required for proper Z-ring formation. It is recruited early to the divisome by direct interaction with FtsZ, stimulating Z-ring assembly and thereby promoting cell division earlier in the cell cycle. Its recruitment to the Z-ring requires functional FtsA or ZipA. The chain is Cell division protein ZapB from Aeromonas salmonicida (strain A449).